The sequence spans 564 residues: MEKSSSNFIQNGKRDHGGKLRQYNYKLEEAEYRYFTEERLFYRRRNPVEKIAQRIPKPQIEGTFTWSDELRCNYDGNTQFLPVEALEGCLPLEKLNQHLKPGFRLEVVVRPSLDPSITTKSPEIRWFGEVTAVCGFYVAIKFVGELNRRPCWFHMLSEDIFDIGSGLKQDPAMKWLQYRPLSLLKPMQCPKFWRRGSTPAPPVPRPTEEILDEFQAELHENRISEPKIFDQLRHLAHRPSRFRLNQRVELLNYLEPTEIRVARILRILGRRLMVMVTAQDYPEDLPSVEAKDRQVQHENVEFWVDESSFFLFPVGFAMINGLRTKATEGYLEHSRRIAEGSGSYHKDDVTFEQLFAGKPDISAEKLNLLKVGQKFELLDPLSDLRQSFCVATIRKICKTPGFLIISPDETESDDESFPIHIDNHFMHPVGYAEKFGIKLDRLAGTEPGKFKWEGYLKEKQAEKIPDEMLRPLPSKERRHMFEFGRVLEAVGQNETYWISPASVEEVHGRTVLIEFQGWDSEFSELYDMDSHDLLPAGWCEFFNFKLRHPVLPVNDPNAENGEYD.

MBT repeat units follow at residues 64-176 (FTWS…MKWL), 205-327 (RPTE…TKAT), 331-442 (LEHS…LDRL), and 450-549 (FKWE…LRHP).

In terms of assembly, interacts with histone H3 that is trimethylated at 'Lys-9' (H3K9me3).

The sequence is that of Malignant brain tumor repeat protein 1 (mbtr-1) from Caenorhabditis elegans.